Reading from the N-terminus, the 284-residue chain is Pantothenate synthetase (284 aa).

Position 30–37 (30–37) interacts with ATP; sequence MGNLHDGH. The active-site Proton donor is the His37. Gln61 contributes to the (R)-pantoate binding site. Residue Gln61 participates in beta-alanine binding. Residue 149–152 coordinates ATP; the sequence is GEKD. Position 155 (Gln155) interacts with (R)-pantoate. ATP contacts are provided by residues Val178 and 186–189; that span reads LSSR.

Belongs to the pantothenate synthetase family. Homodimer.

The protein resides in the cytoplasm. It catalyses the reaction (R)-pantoate + beta-alanine + ATP = (R)-pantothenate + AMP + diphosphate + H(+). Its pathway is cofactor biosynthesis; (R)-pantothenate biosynthesis; (R)-pantothenate from (R)-pantoate and beta-alanine: step 1/1. Catalyzes the condensation of pantoate with beta-alanine in an ATP-dependent reaction via a pantoyl-adenylate intermediate. The chain is Pantothenate synthetase from Klebsiella pneumoniae (strain 342).